The sequence spans 221 residues: Ras-related protein Rab-28 (221 aa).

S2 carries the N-acetylserine modification. S8 bears the Phosphoserine mark. Residues G21, G24, K25, T26, S27, G38, K39, Y41, and T44 each coordinate GTP. A Mg(2+)-binding site is contributed by T26. Residues 35–49 (ETFGKQYKQTIGLDF) form a switch I region. The Mg(2+) site is built by T44 and D68. Positions 68–85 (DIGGQTIGGKMLDKYIYG) are switch II. 6 residues coordinate GTP: G71, N129, K130, D132, A160, and K161. The residue at position 218 (C218) is a Cysteine methyl ester. The S-farnesyl cysteine moiety is linked to residue C218. The propeptide at 219-221 (AVQ) is removed in mature form.

It belongs to the small GTPase superfamily. Rab family. As to quaternary structure, interacts (prenylated form) with PDE6D; the interaction promotes RAB28 delivery to the photoreceptor outer segments. Interacts with KCNJ13; the interaction may facilitate cone outer segments phagocytosis. Interacts with RELA; the interaction contributes to RELA transport from cytoplasm to nucleus. Requires Mg(2+) as cofactor. Post-translationally, isoprenylated.

The protein resides in the cell membrane. The protein localises to the cytoplasm. It localises to the cytoskeleton. It is found in the cilium basal body. Its subcellular location is the nucleus. It catalyses the reaction GTP + H2O = GDP + phosphate + H(+). With respect to regulation, regulated by guanine nucleotide exchange factors (GEFs) which promote the exchange of bound GDP for free GTP. Regulated by GTPase activating proteins (GAPs) which increase the GTP hydrolysis activity. Inhibited by GDP dissociation inhibitors (GDIs). Its function is as follows. The small GTPases Rab are key regulators of intracellular membrane trafficking, from the formation of transport vesicles to their fusion with membranes. Rabs cycle between an inactive GDP-bound form and an active GTP-bound form that is able to recruit to membranes different sets of downstream effectors directly responsible for vesicle formation, movement, tethering and fusion. RAB28 is required for shedding and phagocytosis of cone cell outer segments (OS) discs in the retina. Also participates in nuclear factor kappa-B p65/RELA nuclear transport in endothelial cells. The chain is Ras-related protein Rab-28 (RAB28) from Bos taurus (Bovine).